The sequence spans 119 residues: Putative yippee-like protein Os10g0369500 (119 aa).

Residues 21–118 (AVLKCRRCRV…LEKARMWKEA (98 aa)) form the Yippee domain. Cys-25, Cys-28, Cys-81, and Cys-84 together coordinate Zn(2+).

It belongs to the yippee family.

The sequence is that of Putative yippee-like protein Os10g0369500 from Oryza sativa subsp. japonica (Rice).